The following is a 95-amino-acid chain: Aspartyl/glutamyl-tRNA(Asn/Gln) amidotransferase subunit C (95 aa).

This sequence belongs to the GatC family. Heterotrimer of A, B and C subunits.

It catalyses the reaction L-glutamyl-tRNA(Gln) + L-glutamine + ATP + H2O = L-glutaminyl-tRNA(Gln) + L-glutamate + ADP + phosphate + H(+). The catalysed reaction is L-aspartyl-tRNA(Asn) + L-glutamine + ATP + H2O = L-asparaginyl-tRNA(Asn) + L-glutamate + ADP + phosphate + 2 H(+). Its function is as follows. Allows the formation of correctly charged Asn-tRNA(Asn) or Gln-tRNA(Gln) through the transamidation of misacylated Asp-tRNA(Asn) or Glu-tRNA(Gln) in organisms which lack either or both of asparaginyl-tRNA or glutaminyl-tRNA synthetases. The reaction takes place in the presence of glutamine and ATP through an activated phospho-Asp-tRNA(Asn) or phospho-Glu-tRNA(Gln). This is Aspartyl/glutamyl-tRNA(Asn/Gln) amidotransferase subunit C from Anaeromyxobacter sp. (strain Fw109-5).